Consider the following 521-residue polypeptide: Cell adhesion molecule CEACAM1 (521 aa).

Residues 1–34 (MELASAHLHKGQVPWGGLLLTASLLASWSPATTA) form the signal peptide. One can recognise an Ig-like V-type domain in the interval 35-142 (EVTIEAVPPQ…QATVRFHVHP (108 aa)). Residues 35-428 (EVTIEAVPPQ…GGLSDGAIAG (394 aa)) lie on the Extracellular side of the membrane. Residues 39–142 (EAVPPQVAED…QATVRFHVHP (104 aa)) are required for homophilic binding. N-linked (GlcNAc...) asparagine glycans are attached at residues Asn71, Asn89, Asn104, Asn148, Asn152, Asn199, Asn206, Asn210, Asn226, Asn258, Asn290, Asn294, Asn304, Asn317, Asn333, and Asn375. 3 Ig-like C2-type domains span residues 147–234 (PNIT…FSLN), 239–319 (PDTP…KNIT), and 323–411 (PVTQ…IKLD). A disulfide bridge links Cys167 with Cys217. Cysteines 261 and 301 form a disulfide. Cys346 and Cys394 are disulfide-bonded. Residues 429-447 (IVIGVVAGVALIAGLAYFL) form a helical membrane-spanning segment. The interval 445–457 (YFLYSRKSGGGSD) is interaction with calmodulin. The interval 447 to 521 (LYSRKSGGGS…ETVYSEVKKK (75 aa)) is interaction with FLNA. At 448–521 (YSRKSGGGSD…ETVYSEVKKK (74 aa)) the chain is on the cytoplasmic side. The segment at 455–521 (GSDQRDLTEH…ETVYSEVKKK (67 aa)) is disordered. The segment covering 457 to 466 (DQRDLTEHKP) has biased composition (basic and acidic residues). The span at 467-481 (STSNHNLAPSDNSPN) shows a compositional bias: polar residues. The segment at 484 to 521 (DDVAYTVLNFNSQQPNRPTSAPSSPRATETVYSEVKKK) is required for interaction with PTPN11 and PTPN6 and for control of phosphorylation level. Residue Tyr488 is modified to Phosphotyrosine; by SRC, LCK, INSR and EGFR. The segment covering 491–514 (LNFNSQQPNRPTSAPSSPRATETV) has biased composition (polar residues). Position 503 is a phosphoserine (Ser503). Residue Tyr515 is modified to Phosphotyrosine; by INSR, SRC and LCK. The tract at residues 515 to 518 (YSEV) is essential for interaction with PTPN11 and PTPN6.

Belongs to the immunoglobulin superfamily. CEA family. (Microbial infection) Interacts with MHV S1 spike glycoprotein. In terms of assembly, monomer. Oligomer. Heterodimer. Homodimer. Cis-dimer/oligomer (via Ig-like C2-type and/or via cytoplasmic domains); induced by trans-homophilic cell adhesion through an allosteric mechanism transmitted by the Ig-like V-type domain, and is regulated by intracellular calcium and calmodulin. Interacts (via cytoplasmic domain) with calmodulin in a calcium dependent manner; reduces homophilic cell adhesion through dissociation of dimer. Isoform 1 interacts (via cytoplasmic domain) with PTPN11 (preferentially) and PTPN6; cis-homodimer form is preferred; this interaction is decreased by formation of isoform 1 / isoform 2 cis-heterodimers and is dependent on the monomer/dimer equilibrium; this interaction is phosphorylation-dependent. Isoform 1 interacts with LYN. Isoform 1 interacts (via cytoplasmic domain) with SRC (via SH2 domain); this interaction is regulated by trans-homophilic cell adhesion. Isoform 1 interacts with LCK; mediates phosphorylation at Tyr-488 and Tyr-515 resulting in PTPN6 association. Isoform 1 interacts with PTPN6; this interaction is phosphorylation-dependent and causes a profound decrease in TCR stimulation-induced CD247 and ZAP70 phosphorylation. Isoform 1 interacts with TCR/CD3 complex through TCR beta chain and CD3E; colocalizes at the cell surface and upon stimulation of the TCR/CD3 complex recruits PTPN6 in the TCR/CD3 complex, resulting in dephosphorylation of CD247 and ZAP70. Isoform 1 interacts (via cytoplasmic domain) with SHC1 (via SH2 domain); SHC1 mediates interaction with INSR or EGFR in a Ser-503 phosphorylation-dependent manner. Isoform 1 interacts with EGFR; the interaction is indirect. Isoform 1 interacts with CSF3R; down-regulates the CSF3R-STAT3 pathway through recruitment of PTPN6 that dephosphorylates CSF3R. Isoform 1 (phosphorylated form) interacts with TLR4 and SYK; recruits PTPN6 that dephosphorylates SYK, reducing the production of reactive oxygen species (ROS) and lysosome disruption, leading to a reduction of the inflammasome activity. Isoform 1 interacts with FLNA; inhibits cell migration and cell scattering by interfering with the interaction of FLNA with RALA. Isoform 1 interacts (via cytoplasmic domain) with PXN; the interaction is phosphotyrosyl-dependent. Isoform 1 interacts with KLRK1; recruits PTPN6 that dephosphorylates VAV1. Isoform 1 interacts with CEACAM8. Isoform 1 interacts with FASN; this interaction is insulin and phosphorylation-dependent; reduces fatty-acid synthase activity. Interacts (via Ig-like V-type) with HAVCR2 (via Ig-like V-type); facilitates the maturation and cell surface expression of HAVCR2 thereby regulating T-cell tolerance induction. Isoform 2 interacts (via the cytoplasmic domain) with ANXA2; this interaction is regulated by phosphorylation and appears in the AIIt complex. Interacts (via Lewis X moieties) with CD209 (via C-type lectin domain); this interaction is regulated by the glycosylation pattern of CEACAM1 on cell types and regulates contact between dendritic cells and neutrophils. Phosphorylated on serine and tyrosine. Isoform 1 is phosphorylated on tyrosine by Src family kinases like SRC and LCK and by receptor like CSF3R, EGFR and INSR upon stimulation. Phosphorylated at Ser-503; mediates activity. Phosphorylated at Tyr-488; regulates activity. Phosphorylated at Tyr-488 by EGFR and INSR upon stimulation; this phosphorylation is Ser-503-phosphorylation-dependent; mediates cellular internalization; increases interaction with FASN. Phosphorylated at Tyr-488 and Tyr-515 by LCK; mediates PTPN6 association and is regulated by homophilic ligation of CEACAM1 in the absence of T-cell activation. Phosphorylated at Tyr-515; mediates interaction with PTPN11. In terms of processing, phosphorylated on serine and threonine. In terms of tissue distribution, expressed in granulocytes, lymphocytes, granulocytes, B cells, and T-cells. Expressed in bone. Highly expressed in liver and femur. Highly expressed in neutrophils, and to a lesser extent inmonocytes, and macrophages. Slightly higher expressed in peripheral blood neutrophils (PBNs). Intestinal T-cells predominantly express isoform 2 while extraintestinal T-cells mainly express isoform 1. Expressed in small intestine and colon.

The protein resides in the cell membrane. It is found in the lateral cell membrane. Its subcellular location is the apical cell membrane. The protein localises to the basal cell membrane. It localises to the cell junction. The protein resides in the adherens junction. It is found in the cytoplasmic vesicle. Its subcellular location is the secretory vesicle. The protein localises to the cell projection. It localises to the microvillus membrane. Its function is as follows. Cell adhesion protein that mediates homophilic cell adhesion in a calcium-independent manner. Plays a role as coinhibitory receptor in immune response, insulin action and also functions as an activator during angiogenesis. Its coinhibitory receptor function is phosphorylation- and PTPN6 -dependent, which in turn, suppress signal transduction of associated receptors by dephosphorylation of their downstream effectors. Plays a role in immune response, of T-cells, natural killer (NK) and neutrophils. Upon TCR/CD3 complex stimulation, inhibits TCR-mediated cytotoxicity by blocking granule exocytosis by mediating homophilic binding to adjacent cells, allowing interaction with and phosphorylation by LCK and interaction with the TCR/CD3 complex which recruits PTPN6 resulting in dephosphorylation of CD247 and ZAP70. Also inhibits T-cell proliferation and cytokine production through inhibition of JNK cascade and plays a crucial role in regulating autoimmunity and anti-tumor immunity by inhibiting T-cell through its interaction with HAVCR2. Upon natural killer (NK) cells activation, inhibit KLRK1-mediated cytolysis of CEACAM1-bearing tumor cells by trans-homophilic interactions with CEACAM1 on the target cell and lead to cis-interaction between CEACAM1 and KLRK1, allowing PTPN6 recruitment and then VAV1 dephosphorylation. Upon neutrophils activation negatively regulates IL1B production by recruiting PTPN6 to a SYK-TLR4-CEACAM1 complex, that dephosphorylates SYK, reducing the production of reactive oxygen species (ROS) and lysosome disruption, which in turn, reduces the activity of the inflammasome. Down-regulates neutrophil production by acting as a coinhibitory receptor for CSF3R by downregulating the CSF3R-STAT3 pathway through recruitment of PTPN6 that dephosphorylates CSF3R. Also regulates insulin action by promoting INS clearance and regulating lipogenesis in liver through regulating insulin signaling. Upon INS stimulation, undergoes phosphorylation by INSR leading to INS clearance by increasing receptor-mediated insulin endocytosis. This inernalization promotes interaction with FASN leading to receptor-mediated insulin degradation and to reduction of FASN activity leading to negative regulation of fatty acid synthesis. INSR-mediated phosphorylation also provokes a down-regulation of cell proliferation through SHC1 interaction resulting in decrease coupling of SHC1 to the MAPK3/ERK1-MAPK1/ERK2 and phosphatidylinositol 3-kinase pathways. Functions as activator in angiogenesis by promoting blood vessel remodeling through endothelial cell differentiation and migration and in arteriogenesis by increasing the number of collateral arteries and collateral vessel calibers after ischemia. Also regulates vascular permeability through the VEGFR2 signaling pathway resulting in control of nitric oxide production. Down-regulates cell growth in response to EGF through its interaction with SHC1 that mediates interaction with EGFR resulting in decrease coupling of SHC1 to the MAPK3/ERK1-MAPK1/ERK2 pathway. Negatively regulates platelet aggregation by decreasing platelet adhesion on type I collagen through the GPVI-FcRgamma complex. Inhibits cell migration and cell scattering through interaction with FLNA; interferes with the interaction of FLNA with RALA. Mediates bile acid transport activity in a phosphorylation dependent manner. Negatively regulates osteoclastogenesis. In terms of biological role, cell adhesion protein that mediates homophilic cell adhesion in a calcium-independent manner. Promotes populations of T-cells regulating IgA production and secretion associated with control of the commensal microbiota and resistance to enteropathogens. Functionally, (Microbial infection) In case of murine coronavirus (MHV) infection, serves as receptor for MHV S1 spike glycoprotein. This Mus musculus (Mouse) protein is Cell adhesion molecule CEACAM1.